We begin with the raw amino-acid sequence, 618 residues long: UvrABC system protein C (618 aa).

Residues 20–98 enclose the GIY-YIG domain; the sequence is TAPGVYRMYA…IKSLSPRYNV (79 aa). The UVR domain occupies 207-242; sequence DQLGEEIMHSMQQASEALEFERAARLRDLLSSLRSM.

Belongs to the UvrC family. In terms of assembly, interacts with UvrB in an incision complex.

It is found in the cytoplasm. Its function is as follows. The UvrABC repair system catalyzes the recognition and processing of DNA lesions. UvrC both incises the 5' and 3' sides of the lesion. The N-terminal half is responsible for the 3' incision and the C-terminal half is responsible for the 5' incision. This Xanthomonas campestris pv. campestris (strain 8004) protein is UvrABC system protein C.